A 115-amino-acid polypeptide reads, in one-letter code: Protachykinin-1 (115 aa).

The N-terminal stretch at 1-19 (MKILVALAVLALVSTQLFA) is a signal peptide. The propeptide occupies 20-56 (EDIRANDDLNYWSDWSDSDQIKEELPEPFEHLLQRIA). Methionine amide is present on residues Met-68 and Met-92.

The protein belongs to the tachykinin family. In terms of processing, the substance P form is cleaved at Pro-59 by the prolyl endopeptidase FAP (seprase) activity (in vitro). Substance P is also cleaved and degraded by Angiotensin-converting enzyme (ACE) and neprilysin (MME).

The protein resides in the secreted. Functionally, tachykinins are active peptides which excite neurons, evoke behavioral responses, are potent vasodilators and secretagogues, and contract (directly or indirectly) many smooth muscles. The polypeptide is Protachykinin-1 (TAC1) (Oryctolagus cuniculus (Rabbit)).